The sequence spans 158 residues: Protein-export protein SecB (158 aa).

The protein belongs to the SecB family. Homotetramer, a dimer of dimers. One homotetramer interacts with 1 SecA dimer.

It is found in the cytoplasm. One of the proteins required for the normal export of preproteins out of the cell cytoplasm. It is a molecular chaperone that binds to a subset of precursor proteins, maintaining them in a translocation-competent state. It also specifically binds to its receptor SecA. This chain is Protein-export protein SecB, found in Pectobacterium atrosepticum (strain SCRI 1043 / ATCC BAA-672) (Erwinia carotovora subsp. atroseptica).